Here is a 730-residue protein sequence, read N- to C-terminus: Elongation factor 2 (730 aa).

A tr-type G domain is found at 19-229; that stretch reads DYIRNIGIVA…NITFKDIIQY (211 aa). GTP-binding positions include 28 to 35, 94 to 98, and 148 to 151; these read AHIDHGKT, DTPGH, and NKVD. His-597 is subject to Diphthamide.

It belongs to the TRAFAC class translation factor GTPase superfamily. Classic translation factor GTPase family. EF-G/EF-2 subfamily.

Its subcellular location is the cytoplasm. Functionally, catalyzes the GTP-dependent ribosomal translocation step during translation elongation. During this step, the ribosome changes from the pre-translocational (PRE) to the post-translocational (POST) state as the newly formed A-site-bound peptidyl-tRNA and P-site-bound deacylated tRNA move to the P and E sites, respectively. Catalyzes the coordinated movement of the two tRNA molecules, the mRNA and conformational changes in the ribosome. This is Elongation factor 2 from Methanosphaera stadtmanae (strain ATCC 43021 / DSM 3091 / JCM 11832 / MCB-3).